We begin with the raw amino-acid sequence, 155 residues long: Ribosomal RNA large subunit methyltransferase H (155 aa).

S-adenosyl-L-methionine contacts are provided by residues Leu72, Gly104, and 123–128; that span reads LAKITL.

It belongs to the RNA methyltransferase RlmH family. Homodimer.

The protein localises to the cytoplasm. It catalyses the reaction pseudouridine(1915) in 23S rRNA + S-adenosyl-L-methionine = N(3)-methylpseudouridine(1915) in 23S rRNA + S-adenosyl-L-homocysteine + H(+). Specifically methylates the pseudouridine at position 1915 (m3Psi1915) in 23S rRNA. This is Ribosomal RNA large subunit methyltransferase H from Mycoplasma mycoides subsp. mycoides SC (strain CCUG 32753 / NCTC 10114 / PG1).